Reading from the N-terminus, the 563-residue chain is Arginine--tRNA ligase (563 aa).

The short motif at 123–133 is the 'HIGH' region element; sequence PNIAKDMHVGH.

Belongs to the class-I aminoacyl-tRNA synthetase family. As to quaternary structure, monomer.

The protein resides in the cytoplasm. It catalyses the reaction tRNA(Arg) + L-arginine + ATP = L-arginyl-tRNA(Arg) + AMP + diphosphate. The sequence is that of Arginine--tRNA ligase (argS) from Chlamydia trachomatis serovar D (strain ATCC VR-885 / DSM 19411 / UW-3/Cx).